The following is a 144-amino-acid chain: Superoxide dismutase [Mn], mitochondrial (144 aa).

Residues His-10, His-58, and Asp-143 each contribute to the Mn(2+) site.

Belongs to the iron/manganese superoxide dismutase family. Homotetramer. The cofactor is Mn(2+).

It localises to the mitochondrion matrix. The catalysed reaction is 2 superoxide + 2 H(+) = H2O2 + O2. Functionally, destroys superoxide anion radicals which are normally produced within the cells and which are toxic to biological systems. The protein is Superoxide dismutase [Mn], mitochondrial of Apostichopus californicus (California sea cucumber).